The following is a 602-amino-acid chain: Elongation factor 4 (602 aa).

The tr-type G domain occupies 7-189; sequence RNIRNFSIIA…AIVHRIPPPK (183 aa). GTP is bound by residues 19–24 and 136–139; these read DHGKST and NKID.

The protein belongs to the TRAFAC class translation factor GTPase superfamily. Classic translation factor GTPase family. LepA subfamily.

The protein resides in the cell inner membrane. It catalyses the reaction GTP + H2O = GDP + phosphate + H(+). Required for accurate and efficient protein synthesis under certain stress conditions. May act as a fidelity factor of the translation reaction, by catalyzing a one-codon backward translocation of tRNAs on improperly translocated ribosomes. Back-translocation proceeds from a post-translocation (POST) complex to a pre-translocation (PRE) complex, thus giving elongation factor G a second chance to translocate the tRNAs correctly. Binds to ribosomes in a GTP-dependent manner. The sequence is that of Elongation factor 4 from Stenotrophomonas maltophilia (strain R551-3).